Reading from the N-terminus, the 332-residue chain is Glyceraldehyde-3-phosphate dehydrogenase 1 (332 aa).

Residues 11–12 (RI), Asp33, and Arg78 contribute to the NAD(+) site. Residues 149 to 151 (SCT), Thr180, 209 to 210 (TG), and Arg232 each bind D-glyceraldehyde 3-phosphate. Cys150 (nucleophile) is an active-site residue. Asn314 serves as a coordination point for NAD(+).

Belongs to the glyceraldehyde-3-phosphate dehydrogenase family. As to quaternary structure, homotetramer.

The protein resides in the cytoplasm. It carries out the reaction D-glyceraldehyde 3-phosphate + phosphate + NAD(+) = (2R)-3-phospho-glyceroyl phosphate + NADH + H(+). Its pathway is carbohydrate degradation; glycolysis; pyruvate from D-glyceraldehyde 3-phosphate: step 1/5. This is Glyceraldehyde-3-phosphate dehydrogenase 1 (GPD1) from Candida glabrata (strain ATCC 2001 / BCRC 20586 / JCM 3761 / NBRC 0622 / NRRL Y-65 / CBS 138) (Yeast).